The following is a 389-amino-acid chain: S-adenosylmethionine synthase (389 aa).

H15 lines the ATP pocket. D17 is a Mg(2+) binding site. E43 is a binding site for K(+). Residues E56 and Q99 each coordinate L-methionine. The segment at Q99–E109 is flexible loop. ATP is bound by residues D166–K168, R234–F235, D243, R249–K250, A266, and K270. L-methionine is bound at residue D243. K274 lines the L-methionine pocket.

The protein belongs to the AdoMet synthase family. In terms of assembly, homotetramer; dimer of dimers. It depends on Mg(2+) as a cofactor. K(+) is required as a cofactor.

It localises to the cytoplasm. It carries out the reaction L-methionine + ATP + H2O = S-adenosyl-L-methionine + phosphate + diphosphate. The protein operates within amino-acid biosynthesis; S-adenosyl-L-methionine biosynthesis; S-adenosyl-L-methionine from L-methionine: step 1/1. Catalyzes the formation of S-adenosylmethionine (AdoMet) from methionine and ATP. The overall synthetic reaction is composed of two sequential steps, AdoMet formation and the subsequent tripolyphosphate hydrolysis which occurs prior to release of AdoMet from the enzyme. The chain is S-adenosylmethionine synthase from Chromobacterium violaceum (strain ATCC 12472 / DSM 30191 / JCM 1249 / CCUG 213 / NBRC 12614 / NCIMB 9131 / NCTC 9757 / MK).